The chain runs to 696 residues: uncharacterized protein (696 aa).

The region spanning 293-426 is the GGDEF domain; it reads SVLGLVLLGF…GSRQYCFYEE (134 aa). An EAL domain is found at 435-689; it reads RIQLEHALHQ…EITAFLAEGN (255 aa).

This is an uncharacterized protein from Synechocystis sp. (strain ATCC 27184 / PCC 6803 / Kazusa).